A 2346-amino-acid polypeptide reads, in one-letter code: N-benzoylphenylalaninol synthetase apmA (2346 aa).

The segment at 263–652 is adenylation 1; sequence ESAAQKSPDA…GRKDLQVKIR (390 aa). The Carrier 1 domain maps to 784 to 860; the sequence is MPTTTTEMTL…DMAKAMTSTR (77 aa). O-(pantetheine 4'-phosphoryl)serine is present on serine 821. The segment at 896–1306 is condensation; it reads QDAYPCSPLQ…ISPQDKENLL (411 aa). Positions 1330–1713 are adenylation 2; that stretch reads SQPNAPAICA…GRKDTQVKIR (384 aa). A Carrier 2 domain is found at 1842 to 1924; the sequence is SALRASEDKA…GLAAFIDAEL (83 aa). The residue at position 1883 (serine 1883) is an O-(pantetheine 4'-phosphoryl)serine. The segment at 1960–2311 is reductase (R) domain; the sequence is VTGGTGFLGT…RNVQFLVEAG (352 aa).

It belongs to the NRP synthetase family.

It carries out the reaction benzoate + L-phenylalanine + 2 AH2 + 2 ATP = N-benzoyl-L-phenylalaninol + 2 A + 2 AMP + 2 diphosphate + H(+). Its pathway is secondary metabolite biosynthesis. Its function is as follows. Nonribosomal peptide synthase; part of the gene cluster that mediates the biosynthesis of asperphenamate, a rare linear amino acid ester that exhibits antitumor activity towards a number of cell lines. The structure of asperphenamate contains two subunits, N-benzoylphenylalanine and N-benzoylphenylalaninol, which are connected by an inter-molecular ester bond. The first step of asperphenamate biosynthesis is the generation of N-benzoylphenylalaninol by the nonribosomal peptide synthase apmA. Using phenylalanine and benzoic acid as substrates, apmA catalyzes amide bond formation and tethers the intermediate into the NRPS chain. Then, the terminal R domain of apmA catalyzes the reduction reaction to get the shunt product N-benzoylphenylalaninol. Subsequently, the nonribosomal peptide synthase apmB activates the same substrates as does apmA (phenylalanine and benzoic acid) to produce N-benzoylphenylalanine before condensing N-benzoylphenylalanine and N-benzoylphenylalaninol to release asperphenamate. The sequence is that of N-benzoylphenylalaninol synthetase apmA from Penicillium brevicompactum.